We begin with the raw amino-acid sequence, 219 residues long: Ribose-5-phosphate isomerase A (219 aa).

Substrate-binding positions include 28-31 (SGST), 81-84 (DGAD), and 94-97 (KGGG). Glu-103 (proton acceptor) is an active-site residue. Residue Lys-121 participates in substrate binding.

It belongs to the ribose 5-phosphate isomerase family. As to quaternary structure, homodimer.

The catalysed reaction is aldehydo-D-ribose 5-phosphate = D-ribulose 5-phosphate. The protein operates within carbohydrate degradation; pentose phosphate pathway; D-ribose 5-phosphate from D-ribulose 5-phosphate (non-oxidative stage): step 1/1. In terms of biological role, catalyzes the reversible conversion of ribose-5-phosphate to ribulose 5-phosphate. This is Ribose-5-phosphate isomerase A from Pasteurella multocida (strain Pm70).